We begin with the raw amino-acid sequence, 357 residues long: S-adenosylmethionine decarboxylase proenzyme (357 aa).

Active-site residues include glutamate 11 and glutamate 14. Serine 71 serves as the catalytic Schiff-base intermediate with substrate; via pyruvic acid. The residue at position 71 (serine 71) is a Pyruvic acid (Ser); by autocatalysis. The active-site Proton donor; for catalytic activity is cysteine 85. Active-site proton acceptor; for processing activity residues include serine 234 and histidine 247.

This sequence belongs to the eukaryotic AdoMetDC family. The cofactor is pyruvate. Is synthesized initially as an inactive proenzyme. Formation of the active enzyme involves a self-maturation process in which the active site pyruvoyl group is generated from an internal serine residue via an autocatalytic post-translational modification. Two non-identical subunits are generated from the proenzyme in this reaction, and the pyruvate is formed at the N-terminus of the alpha chain, which is derived from the carboxyl end of the proenzyme. The post-translation cleavage follows an unusual pathway, termed non-hydrolytic serinolysis, in which the side chain hydroxyl group of the serine supplies its oxygen atom to form the C-terminus of the beta chain, while the remainder of the serine residue undergoes an oxidative deamination to produce ammonia and the pyruvoyl group blocking the N-terminus of the alpha chain.

The catalysed reaction is S-adenosyl-L-methionine + H(+) = S-adenosyl 3-(methylsulfanyl)propylamine + CO2. The protein operates within amine and polyamine biosynthesis; S-adenosylmethioninamine biosynthesis; S-adenosylmethioninamine from S-adenosyl-L-methionine: step 1/1. The sequence is that of S-adenosylmethionine decarboxylase proenzyme (SAMDC) from Catharanthus roseus (Madagascar periwinkle).